Consider the following 261-residue polypeptide: Triosephosphate isomerase (261 aa).

10–12 contacts substrate; it reads NWK. His-100 (electrophile) is an active-site residue. Residue Glu-172 is the Proton acceptor of the active site. Substrate-binding positions include Gly-178, Ser-218, and 239–240; that span reads GG.

Belongs to the triosephosphate isomerase family. Homodimer.

It localises to the cytoplasm. The catalysed reaction is D-glyceraldehyde 3-phosphate = dihydroxyacetone phosphate. It functions in the pathway carbohydrate biosynthesis; gluconeogenesis. The protein operates within carbohydrate degradation; glycolysis; D-glyceraldehyde 3-phosphate from glycerone phosphate: step 1/1. Its function is as follows. Involved in the gluconeogenesis. Catalyzes stereospecifically the conversion of dihydroxyacetone phosphate (DHAP) to D-glyceraldehyde-3-phosphate (G3P). The protein is Triosephosphate isomerase of Mycobacterium leprae (strain TN).